We begin with the raw amino-acid sequence, 514 residues long: Cobyric acid synthase (514 aa).

The 200-residue stretch at 249 to 448 folds into the GATase cobBQ-type domain; the sequence is LIDIAVIKLP…VHGVFDNDEI (200 aa). Cys330 serves as the catalytic Nucleophile. His440 is a catalytic residue.

The protein belongs to the CobB/CobQ family. CobQ subfamily.

The protein operates within cofactor biosynthesis; adenosylcobalamin biosynthesis. In terms of biological role, catalyzes amidations at positions B, D, E, and G on adenosylcobyrinic A,C-diamide. NH(2) groups are provided by glutamine, and one molecule of ATP is hydrogenolyzed for each amidation. This chain is Cobyric acid synthase, found in Ruminiclostridium cellulolyticum (strain ATCC 35319 / DSM 5812 / JCM 6584 / H10) (Clostridium cellulolyticum).